A 503-amino-acid chain; its full sequence is AMP phosphorylase (503 aa).

AMP-binding positions include G168, 194-199 (SRAITS), and T203. The active-site Proton donor is D256. Positions 264 and 288 each coordinate AMP.

Belongs to the thymidine/pyrimidine-nucleoside phosphorylase family. Type 2 subfamily.

It carries out the reaction AMP + phosphate = alpha-D-ribose 1,5-bisphosphate + adenine. The enzyme catalyses CMP + phosphate = cytosine + alpha-D-ribose 1,5-bisphosphate. The catalysed reaction is UMP + phosphate = alpha-D-ribose 1,5-bisphosphate + uracil. In terms of biological role, catalyzes the conversion of AMP and phosphate to adenine and ribose 1,5-bisphosphate (R15P). Exhibits phosphorylase activity toward CMP and UMP in addition to AMP. Functions in an archaeal AMP degradation pathway, together with R15P isomerase and RubisCO. This chain is AMP phosphorylase, found in Methanocaldococcus jannaschii (strain ATCC 43067 / DSM 2661 / JAL-1 / JCM 10045 / NBRC 100440) (Methanococcus jannaschii).